The chain runs to 205 residues: Small ribosomal subunit protein uS4 (205 aa).

Residues 18-49 (NIWGRPKSPVNKREYGPGQHGQRRKGKLSDFG) are disordered. The 64-residue stretch at 94-157 (RRLDTVVYRA…KQLALVLEAN (64 aa)) folds into the S4 RNA-binding domain.

It belongs to the universal ribosomal protein uS4 family. Part of the 30S ribosomal subunit. Contacts protein S5. The interaction surface between S4 and S5 is involved in control of translational fidelity.

In terms of biological role, one of the primary rRNA binding proteins, it binds directly to 16S rRNA where it nucleates assembly of the body of the 30S subunit. Its function is as follows. With S5 and S12 plays an important role in translational accuracy. In Nitrobacter winogradskyi (strain ATCC 25391 / DSM 10237 / CIP 104748 / NCIMB 11846 / Nb-255), this protein is Small ribosomal subunit protein uS4.